The chain runs to 602 residues: Elongation factor 4 (602 aa).

The region spanning 6–188 is the tr-type G domain; that stretch reads DHIRNFSIVA…AIVNKLPAPK (183 aa). Residues 18–23 and 135–138 contribute to the GTP site; these read DHGKST and NKID.

This sequence belongs to the TRAFAC class translation factor GTPase superfamily. Classic translation factor GTPase family. LepA subfamily.

It localises to the cell inner membrane. The enzyme catalyses GTP + H2O = GDP + phosphate + H(+). Its function is as follows. Required for accurate and efficient protein synthesis under certain stress conditions. May act as a fidelity factor of the translation reaction, by catalyzing a one-codon backward translocation of tRNAs on improperly translocated ribosomes. Back-translocation proceeds from a post-translocation (POST) complex to a pre-translocation (PRE) complex, thus giving elongation factor G a second chance to translocate the tRNAs correctly. Binds to ribosomes in a GTP-dependent manner. The polypeptide is Elongation factor 4 (Brucella melitensis biotype 2 (strain ATCC 23457)).